We begin with the raw amino-acid sequence, 420 residues long: UDP-N-acetylglucosamine 1-carboxyvinyltransferase 2 (420 aa).

22–23 serves as a coordination point for phosphoenolpyruvate; sequence KN. Arg92 lines the UDP-N-acetyl-alpha-D-glucosamine pocket. Catalysis depends on Cys116, which acts as the Proton donor. Cys116 carries the post-translational modification 2-(S-cysteinyl)pyruvic acid O-phosphothioketal. UDP-N-acetyl-alpha-D-glucosamine is bound by residues 121–125, Asp307, and Ile329; that span reads RPIDL.

Belongs to the EPSP synthase family. MurA subfamily.

The protein localises to the cytoplasm. It catalyses the reaction phosphoenolpyruvate + UDP-N-acetyl-alpha-D-glucosamine = UDP-N-acetyl-3-O-(1-carboxyvinyl)-alpha-D-glucosamine + phosphate. It participates in cell wall biogenesis; peptidoglycan biosynthesis. Functionally, cell wall formation. Adds enolpyruvyl to UDP-N-acetylglucosamine. The chain is UDP-N-acetylglucosamine 1-carboxyvinyltransferase 2 from Streptococcus thermophilus (strain ATCC BAA-250 / LMG 18311).